We begin with the raw amino-acid sequence, 216 residues long: UDP-N-acetylglucosamine transferase subunit ALG14 (216 aa).

At 1 to 3 the chain is on the lumenal side; sequence MVC. A helical transmembrane segment spans residues 4-24; it reads VLVLAAAAGAVAVFLILRIWV. The Cytoplasmic segment spans residues 25–216; it reads VLRSMDVTPR…PKSVYLGRIV (192 aa).

The protein belongs to the ALG14 family. As to quaternary structure, forms with ALG13 the active heterodimeric UDP-N-acetylglucosamine transferase complex.

The protein localises to the endoplasmic reticulum membrane. Functionally, part of the UDP-N-acetylglucosamine transferase complex that operates in the biosynthetic pathway of dolichol-linked oligosaccharides, the glycan precursors employed in protein asparagine (N)-glycosylation. The assembly of dolichol-linked oligosaccharides begins on the cytosolic side of the endoplasmic reticulum membrane and finishes in its lumen. The sequential addition of sugars to dolichol pyrophosphate produces dolichol-linked oligosaccharides containing fourteen sugars, including two GlcNAcs, nine mannoses and three glucoses. Once assembled, the oligosaccharides are transferred from the lipid to nascent proteins by oligosaccharyltransferases. Functions as a protein-membrane adapter recruiting ALG13 at the cytoplasmic face of the endoplasmic reticulum, where the complex catalyzes the second step of dolichol pyrophosphate biosynthesis, transferring a beta1,4-linked N-acetylglucosamine (GlcNAc) from UDP-GlcNAc to GlcNAc-pyrophosphatedolichol (Gn-PDol) to produce N,N'-diacetylchitobiosyl diphosphodolichol. N,N'-diacetylchitobiosyl diphosphodolichol is a substrate for ALG1, the following enzyme in the biosynthetic pathway. The chain is UDP-N-acetylglucosamine transferase subunit ALG14 from Homo sapiens (Human).